A 492-amino-acid chain; its full sequence is Aspartyl/glutamyl-tRNA(Asn/Gln) amidotransferase subunit B (492 aa).

The protein belongs to the GatB/GatE family. GatB subfamily. As to quaternary structure, heterotrimer of A, B and C subunits.

It catalyses the reaction L-glutamyl-tRNA(Gln) + L-glutamine + ATP + H2O = L-glutaminyl-tRNA(Gln) + L-glutamate + ADP + phosphate + H(+). The enzyme catalyses L-aspartyl-tRNA(Asn) + L-glutamine + ATP + H2O = L-asparaginyl-tRNA(Asn) + L-glutamate + ADP + phosphate + 2 H(+). Its function is as follows. Allows the formation of correctly charged Asn-tRNA(Asn) or Gln-tRNA(Gln) through the transamidation of misacylated Asp-tRNA(Asn) or Glu-tRNA(Gln) in organisms which lack either or both of asparaginyl-tRNA or glutaminyl-tRNA synthetases. The reaction takes place in the presence of glutamine and ATP through an activated phospho-Asp-tRNA(Asn) or phospho-Glu-tRNA(Gln). The polypeptide is Aspartyl/glutamyl-tRNA(Asn/Gln) amidotransferase subunit B (Dehalococcoides mccartyi (strain ATCC BAA-2266 / KCTC 15142 / 195) (Dehalococcoides ethenogenes (strain 195))).